We begin with the raw amino-acid sequence, 379 residues long: Putative zinc metalloprotease sll0528 (379 aa).

A run of 2 helical transmembrane segments spans residues 20–40 (LFGI…LVTL) and 54–74 (GGTP…SVVA). A Zn(2+)-binding site is contributed by H75. The active site involves E76. H79 contacts Zn(2+). Transmembrane regions (helical) follow at residues 115–135 (FAVA…LTIV), 148–168 (IIGL…IPGL), and 212–232 (GILN…WFLL). CBS domains lie at 257 to 315 (VIPN…DWPQ) and 322 to 379 (MQYP…TSAA).

This sequence belongs to the peptidase M50B family. Zn(2+) serves as cofactor.

The protein resides in the cell membrane. The sequence is that of Putative zinc metalloprotease sll0528 from Synechocystis sp. (strain ATCC 27184 / PCC 6803 / Kazusa).